Here is a 230-residue protein sequence, read N- to C-terminus: 5'-methylthioadenosine/S-adenosylhomocysteine nucleosidase (230 aa).

Glu-12 (proton acceptor) is an active-site residue. Substrate-binding positions include Gly-78, Val-152, and Met-173 to Glu-174. The Proton donor role is filled by Asp-197.

It belongs to the PNP/UDP phosphorylase family. MtnN subfamily.

The catalysed reaction is S-adenosyl-L-homocysteine + H2O = S-(5-deoxy-D-ribos-5-yl)-L-homocysteine + adenine. It catalyses the reaction S-methyl-5'-thioadenosine + H2O = 5-(methylsulfanyl)-D-ribose + adenine. The enzyme catalyses 5'-deoxyadenosine + H2O = 5-deoxy-D-ribose + adenine. The protein operates within amino-acid biosynthesis; L-methionine biosynthesis via salvage pathway; S-methyl-5-thio-alpha-D-ribose 1-phosphate from S-methyl-5'-thioadenosine (hydrolase route): step 1/2. Its function is as follows. Catalyzes the irreversible cleavage of the glycosidic bond in both 5'-methylthioadenosine (MTA) and S-adenosylhomocysteine (SAH/AdoHcy) to adenine and the corresponding thioribose, 5'-methylthioribose and S-ribosylhomocysteine, respectively. Also cleaves 5'-deoxyadenosine, a toxic by-product of radical S-adenosylmethionine (SAM) enzymes, into 5-deoxyribose and adenine. The sequence is that of 5'-methylthioadenosine/S-adenosylhomocysteine nucleosidase from Glaesserella parasuis serovar 5 (strain SH0165) (Haemophilus parasuis).